The following is an 891-amino-acid chain: DNA mismatch repair protein MutS (891 aa).

An ATP-binding site is contributed by 643 to 650 (GPNMGGKS).

It belongs to the DNA mismatch repair MutS family.

In terms of biological role, this protein is involved in the repair of mismatches in DNA. It is possible that it carries out the mismatch recognition step. This protein has a weak ATPase activity. This is DNA mismatch repair protein MutS from Xanthomonas campestris pv. campestris (strain ATCC 33913 / DSM 3586 / NCPPB 528 / LMG 568 / P 25).